The primary structure comprises 175 residues: Crossover junction endodeoxyribonuclease RuvC (175 aa).

Active-site residues include Asp16, Glu76, and Asp148. Residues Asp16, Glu76, and Asp148 each contribute to the Mg(2+) site.

It belongs to the RuvC family. Homodimer which binds Holliday junction (HJ) DNA. The HJ becomes 2-fold symmetrical on binding to RuvC with unstacked arms; it has a different conformation from HJ DNA in complex with RuvA. In the full resolvosome a probable DNA-RuvA(4)-RuvB(12)-RuvC(2) complex forms which resolves the HJ. Requires Mg(2+) as cofactor.

Its subcellular location is the cytoplasm. The catalysed reaction is Endonucleolytic cleavage at a junction such as a reciprocal single-stranded crossover between two homologous DNA duplexes (Holliday junction).. In terms of biological role, the RuvA-RuvB-RuvC complex processes Holliday junction (HJ) DNA during genetic recombination and DNA repair. Endonuclease that resolves HJ intermediates. Cleaves cruciform DNA by making single-stranded nicks across the HJ at symmetrical positions within the homologous arms, yielding a 5'-phosphate and a 3'-hydroxyl group; requires a central core of homology in the junction. The consensus cleavage sequence is 5'-(A/T)TT(C/G)-3'. Cleavage occurs on the 3'-side of the TT dinucleotide at the point of strand exchange. HJ branch migration catalyzed by RuvA-RuvB allows RuvC to scan DNA until it finds its consensus sequence, where it cleaves and resolves the cruciform DNA. In Bradyrhizobium diazoefficiens (strain JCM 10833 / BCRC 13528 / IAM 13628 / NBRC 14792 / USDA 110), this protein is Crossover junction endodeoxyribonuclease RuvC.